A 113-amino-acid polypeptide reads, in one-letter code: uncharacterized protein (113 aa).

Positions 31-113 (SNNNNNNNNN…YSPTKFNLQY (83 aa)) are disordered. Residues 32–98 (NNNNNNNNNN…NNNNNNNNNN (67 aa)) show a composition bias toward low complexity. Residues 99 to 113 (SSSFEYSPTKFNLQY) are compositionally biased toward polar residues.

This is an uncharacterized protein from Dictyostelium discoideum (Social amoeba).